We begin with the raw amino-acid sequence, 275 residues long: LQRSFPFHGLQISSFVNSSQTRTDCLAWLGELQTHSWSNDSDTIHFLKPWSQGTFNFQQWEQVQNELWVYRLSVTRDIHDFVKLLKLTYPIELQVFAGCEMHPGNTSESFFHVAYQGMHVLSFRGTLWETAPGTPPFVKLVVKELNLDHGTREMIQELLNNTCPQFVSGLIEAGRSELEKQVKPEAWLSSGPSPGPGRLLLVCRVSGFYPKPVQVMWMRGDQEQPHTRQGDFLPNADGTWYLRVTLDVAAGDAAGLSCRVKHSSLGGQDIYPVLG.

N-linked (GlcNAc...) asparagine glycans are attached at residues N17 and N39. D77 lines the a D-galactosylceramide pocket. 2 disulfide bridges follow: C99/C163 and C203/C258. N105 carries an N-linked (GlcNAc...) asparagine glycan. Residues D148, 148–151 (DHGT), and T151 contribute to the a D-galactosylceramide site. An N-linked (GlcNAc...) asparagine glycan is attached at N160. Residues 164 to 274 (PQFVSGLIEA…LGGQDIYPVL (111 aa)) enclose the Ig-like domain.

In terms of assembly, heterodimer with B2M (beta-2-microglobulin). Interacts with MHC II and CD74. As to expression, expressed on cortical thymocytes, on certain T-cell leukemias, and in various other tissues.

The protein localises to the cell membrane. The protein resides in the basolateral cell membrane. It is found in the endosome membrane. Its subcellular location is the lysosome membrane. It localises to the endoplasmic reticulum membrane. In terms of biological role, antigen-presenting protein that binds self and non-self glycolipids and presents them to T-cell receptors on natural killer T-cells. The polypeptide is Antigen-presenting glycoprotein CD1d (CD1D) (Sylvilagus floridanus (Cottontail rabbit)).